Here is a 370-residue protein sequence, read N- to C-terminus: Coiled-coil domain-containing protein 89 (370 aa).

Residues 1-38 (MPQEESAPRMDTPSSEEPLDKQNRKLEDQEEEMGFKEL) are disordered. At threonine 12 the chain carries Phosphothreonine. The segment covering 18-38 (PLDKQNRKLEDQEEEMGFKEL) has biased composition (basic and acidic residues). Residues 19 to 346 (LDKQNRKLED…YDELRLQSEA (328 aa)) are a coiled coil.

This sequence belongs to the CCDC89 family. Interacts with HEY1.

The protein resides in the cytoplasm. It is found in the nucleus. The polypeptide is Coiled-coil domain-containing protein 89 (Bos taurus (Bovine)).